Here is a 282-residue protein sequence, read N- to C-terminus: MMASNVTNKTDPRSMNSRVFIGNLNTLVVKKTDVEAIFSKYGKIVGCSVHKGFAFVQFSNERTARTAVAGEDGRMIAGQVLDINLAAEPKANRSKTGVKRSAADMYGSSFDLEYDFPRDYYDSYSATRVPAPPPLARAVVPSKRQRVSGNASRRGKSGFNSKSGQRGGSSKSSRLKGDDLQAIKKELSQIKQRVDSLLENLERIERDQSKQDTKLDDDQSSVSLKKEETGVKLIEETGDSAEEGDLLDDDEQGEDTLEEIKDGDKETEEGEDEGDSANEEDS.

Residues 17-88 (SRVFIGNLNT…QVLDINLAAE (72 aa)) enclose the RRM domain. Disordered regions lie at residues 131–177 (APPP…RLKG) and 208–282 (QSKQ…EEDS). The short motif at 141 to 147 (PSKRQRV) is the Nuclear localization signal element. A compositionally biased stretch (low complexity) spans 161 to 172 (SKSGQRGGSSKS). The stretch at 177-217 (GDDLQAIKKELSQIKQRVDSLLENLERIERDQSKQDTKLDD) forms a coiled coil. Composition is skewed to basic and acidic residues over residues 208–217 (QSKQDTKLDD) and 224–235 (LKKEETGVKLIE). Acidic residues-rich tracts occupy residues 236 to 257 (ETGD…EDTL) and 265 to 282 (KETE…EEDS).

It belongs to the RRM HNRPC family. RALY subfamily. In terms of assembly, tetramer.

Its subcellular location is the nucleus. In terms of biological role, binds pre-mRNA and nucleates the assembly of 40S hnRNP particles. Interacts with poly-U tracts in the 3'-UTR or 5'-UTR of mRNA and modulates the stability and the level of translation of bound mRNA molecules. Single HNRNPC tetramers bind 230-240 nucleotides. Trimers of HNRNPC tetramers bind 700 nucleotides. May play a role in the early steps of spliceosome assembly and pre-mRNA splicing. N6-methyladenosine (m6A) has been shown to alter the local structure in mRNAs and long non-coding RNAs (lncRNAs) via a mechanism named 'm(6)A-switch', facilitating binding of HNRNPC, leading to regulation of mRNA splicing. In Xenopus laevis (African clawed frog), this protein is Heterogeneous nuclear ribonucleoprotein C (hnrnpc).